The chain runs to 502 residues: Hexokinase-2 (502 aa).

The helical transmembrane segment at 4 to 24 (VAVATTVVCSVAVCAAAALIV) threads the bilayer. The region spanning 35–487 (ARVIEILKAF…SGVGAALLAA (453 aa)) is the Hexokinase domain. Positions 90–228 (SGDETGFFYA…GLDMLVAALV (139 aa)) are hexokinase small subdomain. Residues Gly104, Thr105, and Asn106 each coordinate ADP. Thr194, Lys195, Asn229, and Asp230 together coordinate D-glucose. Positions 229–476 (NDTIGTLAGG…ESVEVILSND (248 aa)) are hexokinase large subdomain. Thr253 contacts ADP. Asn256, Glu284, and Glu315 together coordinate D-glucose. Gly441 contacts ADP.

It belongs to the hexokinase family. As to expression, highly expressed in siliques, at intermediate levels in roots and flowers, and at lower levels in stems, rosette and cauline leaves.

The protein localises to the mitochondrion outer membrane. The catalysed reaction is a D-hexose + ATP = a D-hexose 6-phosphate + ADP + H(+). The enzyme catalyses D-fructose + ATP = D-fructose 6-phosphate + ADP + H(+). It catalyses the reaction D-glucose + ATP = D-glucose 6-phosphate + ADP + H(+). It functions in the pathway carbohydrate metabolism; hexose metabolism. It participates in carbohydrate degradation; glycolysis; D-glyceraldehyde 3-phosphate and glycerone phosphate from D-glucose: step 1/4. Fructose and glucose phosphorylating enzyme. May be involved in the phosphorylation of glucose during the export from mitochondrion to cytosol. Acts as a sugar sensor which may regulate sugar-dependent gene repression or activation. Mediates the effects of sugar on plant growth and development independently of its catalytic activity or the sugar metabolism. May regulate the execution of program cell death in plant cells. This Arabidopsis thaliana (Mouse-ear cress) protein is Hexokinase-2 (HXK2).